We begin with the raw amino-acid sequence, 345 residues long: uncharacterized protein (345 aa).

Disordered stretches follow at residues Met-1–Asp-58 and Lys-139–Lys-165. A compositionally biased stretch (basic and acidic residues) spans Ile-27–Ser-39. Positions Lys-154 to Lys-165 are enriched in polar residues.

It belongs to the MG307/MG309/MG338 family.

This is an uncharacterized protein from Mycoplasma pneumoniae (strain ATCC 29342 / M129 / Subtype 1) (Mycoplasmoides pneumoniae).